The primary structure comprises 3491 residues: Erythronolide synthase EryA1 (3491 aa).

The segment at 1–484 is loading domain; that stretch reads MSGPRSRTTS…TPRALAEALA (484 aa). Residues 57–372 form an acyltransferase 1 region; sequence VFVFPGQGAQ…AAQAFTGGVA (316 aa). S145 serves as the catalytic Acyl-ester intermediate; for acyltransferase 1 activity. The interval 386 to 410 is disordered; sequence PALCRSSRRPRRKTSRPSPASTGTR. Residues 391–400 show a composition bias toward basic residues; the sequence is SSRRPRRKTS. The 76-residue stretch at 412–487 folds into the Carrier 1 domain; it reads RTCCERLLAV…ALAEALAAGT (76 aa). S447 is modified (O-(pantetheine 4'-phosphoryl)serine). The 425-residue stretch at 504–928 folds into the Ketosynthase family 3 (KS3) 1 domain; sequence GEPVAVVAMA…GTNAHAIIEE (425 aa). 2 module regions span residues 507 to 1958 and 1982 to 3404; these read VAVV…AHLA and IAIV…GFLD. The Acyl-thioester intermediate; for beta-ketoacyl synthase 1 activity role is filled by C677. Catalysis depends on for beta-ketoacyl synthase 1 activity residues H812 and H850. Positions 1031–1352 are acyltransferase 2; the sequence is VFVFPGQGWQ…ALSRAFAAGV (322 aa). S1128 functions as the Acyl-ester intermediate; for acyltransferase 2 activity in the catalytic mechanism. The beta-ketoacyl reductase 1 stretch occupies residues 1613-1790; that stretch reads GTVLVTGGTG…ATAVAWGTWA (178 aa). NADP(+) is bound by residues 1621–1624, 1644–1647, 1673–1674, K1723, and 1745–1746; these read TGGV, SRSG, DV, and FS. Residue Y1760 is the For beta-ketoacyl reductase 1 activity of the active site. One can recognise a Carrier 2 domain in the interval 1886–1961; that stretch reads EALFELVRSH…TLAAHLAAEL (76 aa). The residue at position 1921 (S1921) is an O-(pantetheine 4'-phosphoryl)serine. In terms of domain architecture, Ketosynthase family 3 (KS3) 2 spans 1979–2402; the sequence is DEPIAIVGMA…GTNAHVIIAE (424 aa). C2148 functions as the Acyl-thioester intermediate; for beta-ketoacyl synthase 2 activity in the catalytic mechanism. Active-site for beta-ketoacyl synthase 2 activity residues include H2283 and H2323. The tract at residues 2508–2827 is acyltransferase 3; the sequence is VFVFPGQGAQ…LADAHTRGVA (320 aa). The active-site Acyl-ester intermediate; for acyltransferase 3 activity is S2598. Positions 3057–3233 are beta-ketoacyl reductase 2; sequence GTILVTGGTA…ATSVAWGLWA (177 aa). NADP(+) contacts are provided by residues 3065 to 3068, 3088 to 3091, 3117 to 3118, K3168, and 3188 to 3189; these read TAGL, SRRG, DV, and FS. Catalysis depends on Y3203, which acts as the For beta-ketoacyl reductase 2 activity. The region spanning 3329-3407 is the Carrier 3 domain; the sequence is ERTAELVRLV…AVAGFLDAEL (79 aa). S3367 bears the O-(pantetheine 4'-phosphoryl)serine mark. The tract at residues 3456–3491 is disordered; the sequence is QAADASGTGANPSGDDLGEAGVDELLEALGRELDGD. A compositionally biased stretch (acidic residues) spans 3471-3481; sequence DLGEAGVDELL.

In terms of assembly, homodimer. Erythronolide synthase is composed of EryAI, EryAII and EryAIII multimodular (2 modules) polypeptides each coding for a functional synthase subunit which participates in 2 of the six FAS-like elongation steps required for formation of the polyketide. Module 1, 2, 3, 4, 5, and 6 participating in biosynthesis steps 1, 2, 3, 4, 5, and 6, respectively. It depends on pantetheine 4'-phosphate as a cofactor.

It catalyses the reaction 6 (S)-methylmalonyl-CoA + propanoyl-CoA + 6 NADPH + 12 H(+) = 6-deoxyerythronolide B + 6 CO2 + 6 NADP(+) + 7 CoA + H2O. It participates in antibiotic biosynthesis; erythromycin biosynthesis. Functionally, involved in the biosynthesis of antibiotic erythromycin via the biosynthesis of its aglycone precursor, 6-deoxyerythronolide B (6-dEB). This is Erythronolide synthase EryA1 (eryA) from Saccharopolyspora erythraea (Streptomyces erythraeus).